The primary structure comprises 467 residues: Colanic acid biosynthesis protein WcaM (467 aa).

The protein operates within slime biogenesis; slime polysaccharide biosynthesis. The protein is Colanic acid biosynthesis protein WcaM (wcaM) of Salmonella typhimurium (strain LT2 / SGSC1412 / ATCC 700720).